The chain runs to 190 residues: Probable calcium-binding protein CML27 (190 aa).

3 consecutive EF-hand domains span residues 27-62, 115-150, and 153-188; these read LNAL…LGLG, DDEG…LGLP, and RNLA…ITVW. Aspartate 40, asparagine 42, aspartate 44, glutamate 46, glutamate 51, aspartate 128, aspartate 130, aspartate 132, glutamate 139, aspartate 166, aspartate 168, aspartate 170, arginine 172, and glutamate 177 together coordinate Ca(2+).

Its function is as follows. Potential calcium sensor. The polypeptide is Probable calcium-binding protein CML27 (CML27) (Oryza sativa subsp. japonica (Rice)).